A 634-amino-acid polypeptide reads, in one-letter code: MLTFFAAFLAAPLALAESPYLVRVDAARPLRPLLPFWRSTGFCPPLPHDQADQYDLSWDQQLNLAYIGAVPHSGIEQVRIHWLLDLITARKSPGQGLMYNFTHLDAFLDLLMENQLLPGFELMGSPSGYFTDFDDKQQVFEWKDLVSLLARRYIGRYGLTHVSKWNFETWNEPDHHDFDNVSMTTQGFLNYYDACSEGLRIASPTLKLGGPGDSFHPLPRSPMCWSLLGHCANGTNFFTGEVGVRLDYISLHKKGAGSSIAILEQEMAVVEQVQQLFPEFKDTPIYNDEADPLVGWSLPQPWRADVTYAALVVKVIAQHQNLLFANSSSSMRYVLLSNDNAFLSYHPYPFSQRTLTARFQVNNTHPPHVQLLRKPVLTVMGLMALLDGEQLWAEVSKAGAVLDSNHTVGVLASTHHPEGSAAAWSTTVLIYTSDDTHAHPNHSIPVTLRLRGVPPGLDLVYIVLYLDNQLSSPYSAWQHMGQPVFPSAEQFRRMRMVEDPVAEAPRPFPARGRLTLHRKLPVPSLLLVHVCTRPLKPPGQVSRLRALPLTHGQLILVWSDERVGSKCLWTYEIQFSQKGEEYAPINRRPSTFNLFVFSPDTAVVSGSYRVRALDYWARPGPFSDPVTYLDVPAS.

The first 16 residues, 1 to 16, serve as a signal peptide directing secretion; that stretch reads MLTFFAAFLAAPLALA. Alpha-D-mannopyranose-binding residues include Pro-44, Leu-46, and His-48. An alpha-L-iduronate-binding site is contributed by His-81. Asn-100 carries N-linked (GlcNAc...) asparagine glycosylation. 2 residues coordinate alpha-L-iduronate: Asn-171 and Glu-172. Glu-172 acts as the Proton donor in catalysis. 2 N-linked (GlcNAc...) asparagine glycosylation sites follow: Asn-180 and Asn-233. Lys-254, Glu-289, and Gly-295 together coordinate alpha-L-iduronate. The Nucleophile role is filled by Glu-289. Residue Trp-296 coordinates alpha-D-mannopyranose. Residue Asn-326 is glycosylated (N-linked (GlcNAc...) asparagine). Alpha-L-iduronate contacts are provided by Asp-339 and Arg-353. Asn-362, Asn-405, and Asn-441 each carry an N-linked (GlcNAc...) asparagine glycan. Cys-531 and Cys-567 are disulfide-bonded.

It belongs to the glycosyl hydrolase 39 family. Monomer. In terms of processing, N-glycosylation contributes to substrate binding and is required for full enzymatic activity. In terms of tissue distribution, ubiquitous.

It is found in the lysosome. It carries out the reaction Hydrolysis of unsulfated alpha-L-iduronosidic linkages in dermatan sulfate.. This is Alpha-L-iduronidase (Idua) from Mus musculus (Mouse).